The chain runs to 299 residues: Dye-decolorizing peroxidase YfeX (299 aa).

His-215 serves as a coordination point for heme.

It belongs to the DyP-type peroxidase family. Heme b is required as a cofactor.

It is found in the cytoplasm. In terms of biological role, has both general peroxidase activity and dye-decolorizing activity. Can catalyze the oxidation of 2,2'-azino-bis(3-ethylbenzothiazoline-6-sulphonic acid) (ABTS), and the phenolic compounds guaiacol and catechol. Also decolorizes the anthraquinone dye reactive blue 19 (RB19). In Escherichia coli O157:H7, this protein is Dye-decolorizing peroxidase YfeX.